The following is a 282-amino-acid chain: Alpha/beta-gliadin A-III (282 aa).

Positions 1–20 (MKTFLILALLAIVATTATSA) are cleaved as a signal peptide. Over residues 27 to 59 (QLQPQNPSQQQPQEQVPLMQQQQQFPGQQEQFP) the composition is skewed to low complexity. 2 disordered regions span residues 27-122 (QLQP…AQQQ) and 220-240 (SGQV…SVQP). The segment covering 60-111 (PQQPYPHQQPFPSQQPYPQPQPFPPQLPYPQTQPFPPQQPYPQPQPQYPQPQ) has biased composition (pro residues). Low complexity predominate over residues 112 to 122 (QPISQQQAQQQ). Positions 224–240 (SFQSSQQNPQAQGSVQP) are enriched in polar residues.

The protein belongs to the gliadin/glutenin family. In terms of processing, substrate of transglutaminase.

In terms of biological role, gliadin is the major seed storage protein in wheat. The protein is Alpha/beta-gliadin A-III of Triticum aestivum (Wheat).